The primary structure comprises 629 residues: Putative polypeptide N-acetylgalactosaminyltransferase 10 (629 aa).

Topologically, residues 1–12 are cytoplasmic; the sequence is MGLSRYLSRRHH. A helical; Signal-anchor for type II membrane protein membrane pass occupies residues 13 to 33; it reads WVIQYCALLLFLYFIYSYVAV. At 34 to 629 the chain is on the lumenal side; the sequence is SNDAPRLNEE…RQANEHKELE (596 aa). 2 N-linked (GlcNAc...) asparagine glycosylation sites follow: Asn-143 and Asn-177. 5 disulfide bridges follow: Cys-154–Cys-385, Cys-376–Cys-454, Cys-493–Cys-510, Cys-539–Cys-556, and Cys-582–Cys-598. Positions 163–275 are catalytic subdomain A; the sequence is LPTVSVIFPF…YNWLPPLLDP (113 aa). Residues Asp-204 and Arg-236 each contribute to the substrate site. Asp-259 and His-261 together coordinate Mn(2+). The tract at residues 331 to 393 is catalytic subdomain B; the sequence is PFDSPVMAGG…PCSRVAHIYR (63 aa). A substrate-binding site is contributed by Trp-362. Residue His-390 participates in Mn(2+) binding. Substrate is bound at residue Arg-393. Positions 393–406 are flexible loop; it reads RCKYAPFKNAGMGD. The Ricin B-type lectin domain maps to 526 to 629; sequence TRWHDIRPKG…RQANEHKELE (104 aa).

It belongs to the glycosyltransferase 2 family. GalNAc-T subfamily. Mn(2+) serves as cofactor.

It localises to the golgi apparatus membrane. The catalysed reaction is L-seryl-[protein] + UDP-N-acetyl-alpha-D-galactosamine = a 3-O-[N-acetyl-alpha-D-galactosaminyl]-L-seryl-[protein] + UDP + H(+). The enzyme catalyses L-threonyl-[protein] + UDP-N-acetyl-alpha-D-galactosamine = a 3-O-[N-acetyl-alpha-D-galactosaminyl]-L-threonyl-[protein] + UDP + H(+). Its pathway is protein modification; protein glycosylation. Functionally, may catalyze the initial reaction in O-linked oligosaccharide biosynthesis, the transfer of an N-acetyl-D-galactosamine residue to a serine or threonine residue on the protein receptor. This chain is Putative polypeptide N-acetylgalactosaminyltransferase 10, found in Caenorhabditis briggsae.